A 366-amino-acid polypeptide reads, in one-letter code: Spermidine/putrescine import ATP-binding protein PotA (366 aa).

The region spanning 8-239 (IRFENVTKQF…PINKFVADFI (232 aa)) is the ABC transporter domain. 41-48 (GPSGCGKT) is an ATP binding site.

The protein belongs to the ABC transporter superfamily. Spermidine/putrescine importer (TC 3.A.1.11.1) family. In terms of assembly, the complex is composed of two ATP-binding proteins (PotA), two transmembrane proteins (PotB and PotC) and a solute-binding protein (PotD).

The protein resides in the cell membrane. The catalysed reaction is ATP + H2O + polyamine-[polyamine-binding protein]Side 1 = ADP + phosphate + polyamineSide 2 + [polyamine-binding protein]Side 1.. Functionally, part of the ABC transporter complex PotABCD involved in spermidine/putrescine import. Responsible for energy coupling to the transport system. This Listeria monocytogenes serovar 1/2a (strain ATCC BAA-679 / EGD-e) protein is Spermidine/putrescine import ATP-binding protein PotA.